We begin with the raw amino-acid sequence, 638 residues long: Bifunctional protein glk (638 aa).

Positions methionine 1–proline 20 are disordered. A glucokinase region spans residues methionine 1–serine 341. Alanine 24–threonine 29 provides a ligand contact to ATP. The 77-residue stretch at serine 342–threonine 418 folds into the HTH rpiR-type domain. The segment at serine 342–aspartate 638 is putative HTH-type transcriptional regulator. Residues isoleucine 378–arginine 397 constitute a DNA-binding region (H-T-H motif). Residues alanine 462 to valine 601 enclose the SIS domain.

It in the N-terminal section; belongs to the bacterial glucokinase family.

The protein resides in the cytoplasm. It carries out the reaction D-glucose + ATP = D-glucose 6-phosphate + ADP + H(+). The polypeptide is Bifunctional protein glk (glk) (Paraburkholderia xenovorans (strain LB400)).